The sequence spans 224 residues: 4'-phosphopantetheinyl transferase (224 aa).

Asp-107, Glu-109, and Glu-151 together coordinate Mg(2+). The segment at 158–189 is peptidyl carrier protein binding; it reads GKGLSLPLDSFSVRLKDDGHVSIELPDGHEPC.

Belongs to the P-Pant transferase superfamily. Gsp/Sfp/HetI/AcpT family. Requires Mg(2+) as cofactor.

The catalysed reaction is apo-[peptidyl-carrier protein] + CoA = holo-[peptidyl-carrier protein] + adenosine 3',5'-bisphosphate + H(+). In terms of biological role, may activate the peptidyl carrier protein (PCP) domains of surfactin synthetase SRF1/2/3 and iturin A synthetase, by transferring the 4'-phosphopantetheinyl moiety of coenzyme A (CoA) to a serine residue. Required for the coproduction of the lipopeptide antibiotics, iturin A and surfactin. The polypeptide is 4'-phosphopantetheinyl transferase (lpa-14) (Bacillus subtilis).